The primary structure comprises 344 residues: MKQTKTKYGKMKQIASNLKLPDYRYEQLTKAIFHQRIDNFHDMHILPKALRIALVNEFGKNVSSVTPIFSQDSKQAQKLLFELTDGERIEAVGLKYKQGWESFCISSQCGCSFGCRFCATGSAGFKRNLTADEITDQLLYFYFNDHRLNSISFMGMGEAFANPELFDAVKILTDQNLFGLSQRRITISTIGIIPGIQRLTKEFPQVNLAFSLHSPFESQRSDLMPINKRFPLNEVMKTLDEHIIHTGRRVFIAYIMLEGINDSKEHAEAIIGLLRNRGSWEHLYHIDLIPYNSTDKTTFKFQSSSAIKQFCSTLKKASISATVRTQFGSEISAACGQLCYENEL.

Residue Glu-90 is the Proton acceptor of the active site. The region spanning 97–330 (KQGWESFCIS…ATVRTQFGSE (234 aa)) is the Radical SAM core domain. A disulfide bridge links Cys-104 with Cys-335. Residues Cys-111, Cys-115, and Cys-118 each coordinate [4Fe-4S] cluster. S-adenosyl-L-methionine contacts are provided by residues 157-158 (GE), Ser-188, 211-213 (SLH), and Asn-292. The S-methylcysteine intermediate role is filled by Cys-335.

Belongs to the radical SAM superfamily. RlmN family. Cfr subfamily. [4Fe-4S] cluster is required as a cofactor.

Its subcellular location is the cytoplasm. The catalysed reaction is adenosine(2503) in 23S rRNA + 2 reduced [2Fe-2S]-[ferredoxin] + 2 S-adenosyl-L-methionine = 8-methyladenosine(2503) in 23S rRNA + 5'-deoxyadenosine + L-methionine + 2 oxidized [2Fe-2S]-[ferredoxin] + S-adenosyl-L-homocysteine. Its function is as follows. Specifically methylates position 8 of adenine 2503 in 23S rRNA. Confers resistance to some classes of antibiotics. The polypeptide is Ribosomal RNA large subunit methyltransferase Cfr (Clostridium botulinum (strain Hall / ATCC 3502 / NCTC 13319 / Type A)).